Reading from the N-terminus, the 329-residue chain is DNA-directed RNA polymerase subunit alpha (329 aa).

Residues 1-235 form an alpha N-terminal domain (alpha-NTD) region; that stretch reads MQGSVIEFLK…EQLDAFVDLR (235 aa). The interval 249 to 329 is alpha C-terminal domain (alpha-CTD); that stretch reads FDPILLRPVD…NWPPASIAED (81 aa).

The protein belongs to the RNA polymerase alpha chain family. Homodimer. The RNAP catalytic core consists of 2 alpha, 1 beta, 1 beta' and 1 omega subunit. When a sigma factor is associated with the core the holoenzyme is formed, which can initiate transcription.

The catalysed reaction is RNA(n) + a ribonucleoside 5'-triphosphate = RNA(n+1) + diphosphate. Its function is as follows. DNA-dependent RNA polymerase catalyzes the transcription of DNA into RNA using the four ribonucleoside triphosphates as substrates. The polypeptide is DNA-directed RNA polymerase subunit alpha (Haemophilus ducreyi (strain 35000HP / ATCC 700724)).